A 155-amino-acid polypeptide reads, in one-letter code: 17.4 kDa class III heat shock protein (155 aa).

One can recognise a sHSP domain in the interval 35-155 (GRGSSNNIPI…KPKTVQIAVS (121 aa)).

This sequence belongs to the small heat shock protein (HSP20) family. As to quaternary structure, may form oligomeric structures.

The protein localises to the cytoplasm. In Arabidopsis thaliana (Mouse-ear cress), this protein is 17.4 kDa class III heat shock protein (HSP17.4B).